The following is a 237-amino-acid chain: Lectin alpha chain (237 aa).

The Mn(2+) site is built by Glu-8 and Asp-10. Asp-10, Tyr-12, Asn-14, and Asp-19 together coordinate Ca(2+). Tyr-12 is a binding site for a carbohydrate. 3 residues coordinate Mn(2+): Asp-19, His-24, and Ser-34. 99–100 (LY) serves as a coordination point for a carbohydrate. Asp-208 serves as a coordination point for Ca(2+). Arg-228 contributes to the a carbohydrate binding site.

This sequence belongs to the leguminous lectin family. As to quaternary structure, equilibrium between homodimer and homotetramer. Oligomerization is pH-dependent with homotetramers forming at pH 6.5 and above. The beta and gamma chains are produced by partial proteolytic processing of the lectin alpha chain by an asparaginyl endopeptidase. Mixture of 60% alpha lectin and 40% of its beta and gamma proteolytic fragments. As to expression, seed.

The protein resides in the vacuole. Its subcellular location is the aleurone grain. In terms of biological role, D-mannose/D-glucose-binding lectin. Induces histamine release in mast cells from hamster and rat. Induces lymphocyte proliferation and IFNG production. The chain is Lectin alpha chain from Macropsychanthus bicolor (Dioclea rostrata).